The following is a 460-amino-acid chain: NADH-ubiquinone oxidoreductase chain 4 (460 aa).

Transmembrane regions (helical) follow at residues 20 to 42 (PKWL…LTWL), 61 to 81 (PLST…VLAS), 93 to 113 (QRLY…AFGA), 114 to 134 (TEII…LIII), 148 to 168 (TYFL…LLLL), 195 to 215 (IWWA…GVHL), 225 to 245 (PVAG…YGMM), 258 to 278 (LAYP…SICL), 285 to 304 (SLIA…GILI), 309 to 331 (GFTG…FCLA), 351 to 371 (MIFP…LALP), and 394 to 414 (IILT…LFLM).

This sequence belongs to the complex I subunit 4 family.

It is found in the mitochondrion membrane. It catalyses the reaction a ubiquinone + NADH + 5 H(+)(in) = a ubiquinol + NAD(+) + 4 H(+)(out). Core subunit of the mitochondrial membrane respiratory chain NADH dehydrogenase (Complex I) that is believed to belong to the minimal assembly required for catalysis. Complex I functions in the transfer of electrons from NADH to the respiratory chain. The immediate electron acceptor for the enzyme is believed to be ubiquinone. The chain is NADH-ubiquinone oxidoreductase chain 4 (MT-ND4) from Formosania lacustris (Oriental stream loach).